The chain runs to 264 residues: tRNA (guanine-N(1)-)-methyltransferase (264 aa).

Position 149 to 154 (149 to 154) interacts with S-adenosyl-L-methionine; it reads IGDYVL.

It belongs to the RNA methyltransferase TrmD family. As to quaternary structure, homodimer.

The protein localises to the cytoplasm. It catalyses the reaction guanosine(37) in tRNA + S-adenosyl-L-methionine = N(1)-methylguanosine(37) in tRNA + S-adenosyl-L-homocysteine + H(+). Functionally, specifically methylates guanosine-37 in various tRNAs. This is tRNA (guanine-N(1)-)-methyltransferase from Methylobacillus flagellatus (strain ATCC 51484 / DSM 6875 / VKM B-1610 / KT).